A 367-amino-acid polypeptide reads, in one-letter code: GTP cyclohydrolase FolE2 (367 aa).

The protein belongs to the GTP cyclohydrolase IV family.

The catalysed reaction is GTP + H2O = 7,8-dihydroneopterin 3'-triphosphate + formate + H(+). It participates in cofactor biosynthesis; 7,8-dihydroneopterin triphosphate biosynthesis; 7,8-dihydroneopterin triphosphate from GTP: step 1/1. Its function is as follows. Converts GTP to 7,8-dihydroneopterin triphosphate. This is GTP cyclohydrolase FolE2 from Ruegeria sp. (strain TM1040) (Silicibacter sp.).